The sequence spans 242 residues: 1-(5-phosphoribosyl)-5-[(5-phosphoribosylamino)methylideneamino] imidazole-4-carboxamide isomerase (242 aa).

The active-site Proton acceptor is the D10.

This sequence belongs to the HisA/HisF family.

The protein localises to the cytoplasm. It catalyses the reaction 1-(5-phospho-beta-D-ribosyl)-5-[(5-phospho-beta-D-ribosylamino)methylideneamino]imidazole-4-carboxamide = 5-[(5-phospho-1-deoxy-D-ribulos-1-ylimino)methylamino]-1-(5-phospho-beta-D-ribosyl)imidazole-4-carboxamide. It participates in amino-acid biosynthesis; L-histidine biosynthesis; L-histidine from 5-phospho-alpha-D-ribose 1-diphosphate: step 4/9. The protein is 1-(5-phosphoribosyl)-5-[(5-phosphoribosylamino)methylideneamino] imidazole-4-carboxamide isomerase of Corynebacterium diphtheriae (strain ATCC 700971 / NCTC 13129 / Biotype gravis).